Reading from the N-terminus, the 115-residue chain is Large ribosomal subunit protein bL20 (115 aa).

The protein belongs to the bacterial ribosomal protein bL20 family.

In terms of biological role, binds directly to 23S ribosomal RNA and is necessary for the in vitro assembly process of the 50S ribosomal subunit. It is not involved in the protein synthesizing functions of that subunit. The chain is Large ribosomal subunit protein bL20 from Borrelia garinii subsp. bavariensis (strain ATCC BAA-2496 / DSM 23469 / PBi) (Borreliella bavariensis).